A 615-amino-acid chain; its full sequence is Putative HPr kinase/phosphorylase (615 aa).

Position 480–487 (480–487 (GKSGIGKS)) interacts with ATP.

It belongs to the HPrK/P family.

The catalysed reaction is [HPr protein]-L-serine + ATP = [HPr protein]-O-phospho-L-serine + ADP + H(+). The enzyme catalyses [HPr protein]-O-phospho-L-serine + phosphate + H(+) = [HPr protein]-L-serine + diphosphate. In terms of biological role, catalyzes the ATP- as well as the pyrophosphate-dependent phosphorylation of a specific serine residue in HPr, a phosphocarrier protein of the phosphoenolpyruvate-dependent sugar phosphotransferase system (PTS). HprK/P also catalyzes the pyrophosphate-producing, inorganic phosphate-dependent dephosphorylation (phosphorolysis) of seryl-phosphorylated HPr (P-Ser-HPr). The protein is Putative HPr kinase/phosphorylase (hprK) of Fusobacterium nucleatum subsp. nucleatum (strain ATCC 25586 / DSM 15643 / BCRC 10681 / CIP 101130 / JCM 8532 / KCTC 2640 / LMG 13131 / VPI 4355).